Here is a 209-residue protein sequence, read N- to C-terminus: Cyclin-dependent kinase inhibitor 2 (209 aa).

The required for nuclear localization stretch occupies residues 1-32 (MAAVRRRERDVVEENGVTTTTVKRRKMEEEVD).

Belongs to the CDI family. ICK/KRP subfamily. In terms of assembly, specifically interacts with CDKA-1, but not with CDKB1-1. Phosphorylated.

The protein localises to the nucleus. It localises to the nucleoplasm. Binds and inhibits CYCD2-1/CDKA-1 complex kinase activity. Regulates cell division which is crucial for plant growth, development and morphogenesis. May regulate early lateral root initiation by blocking the G1/S phase transition. Controls the mitosis-to-endocycle transition and the onset of the endoreduplication cycle during leaf development through inhibition of mitotic CDKA-1 kinase complexes. Specifically targets CDKA-1. This Arabidopsis thaliana (Mouse-ear cress) protein is Cyclin-dependent kinase inhibitor 2 (KRP2).